A 60-amino-acid polypeptide reads, in one-letter code: Large ribosomal subunit protein bL32 (60 aa).

Belongs to the bacterial ribosomal protein bL32 family.

The polypeptide is Large ribosomal subunit protein bL32 (Streptococcus mutans serotype c (strain ATCC 700610 / UA159)).